Here is a 217-residue protein sequence, read N- to C-terminus: 3,4-dihydroxy-2-butanone 4-phosphate synthase (217 aa).

D-ribulose 5-phosphate-binding positions include Arg37 to Glu38, Asp42, Arg150 to Thr154, and Glu174. A Mg(2+)-binding site is contributed by Glu38. His153 contributes to the Mg(2+) binding site.

It belongs to the DHBP synthase family. As to quaternary structure, homodimer. The cofactor is Mg(2+). It depends on Mn(2+) as a cofactor.

It carries out the reaction D-ribulose 5-phosphate = (2S)-2-hydroxy-3-oxobutyl phosphate + formate + H(+). The protein operates within cofactor biosynthesis; riboflavin biosynthesis; 2-hydroxy-3-oxobutyl phosphate from D-ribulose 5-phosphate: step 1/1. Its function is as follows. Catalyzes the conversion of D-ribulose 5-phosphate to formate and 3,4-dihydroxy-2-butanone 4-phosphate. The polypeptide is 3,4-dihydroxy-2-butanone 4-phosphate synthase (Shewanella loihica (strain ATCC BAA-1088 / PV-4)).